The sequence spans 499 residues: UDP-N-acetylmuramoyl-L-alanyl-D-glutamate--2,6-diaminopimelate ligase (499 aa).

UDP-N-acetyl-alpha-D-muramoyl-L-alanyl-D-glutamate contacts are provided by leucine 30 and serine 32. 122 to 128 is a binding site for ATP; sequence GTNGKTT. UDP-N-acetyl-alpha-D-muramoyl-L-alanyl-D-glutamate-binding positions include 164-165, serine 191, glutamine 197, and arginine 199; that span reads TT. Lysine 231 is modified (N6-carboxylysine). Residues arginine 397, 421–424, glycine 472, and glutamate 476 each bind meso-2,6-diaminopimelate; that span reads DNPR. Positions 421–424 match the Meso-diaminopimelate recognition motif motif; that stretch reads DNPR.

It belongs to the MurCDEF family. MurE subfamily. Mg(2+) is required as a cofactor. Post-translationally, carboxylation is probably crucial for Mg(2+) binding and, consequently, for the gamma-phosphate positioning of ATP.

The protein localises to the cytoplasm. It carries out the reaction UDP-N-acetyl-alpha-D-muramoyl-L-alanyl-D-glutamate + meso-2,6-diaminopimelate + ATP = UDP-N-acetyl-alpha-D-muramoyl-L-alanyl-gamma-D-glutamyl-meso-2,6-diaminopimelate + ADP + phosphate + H(+). It participates in cell wall biogenesis; peptidoglycan biosynthesis. Catalyzes the addition of meso-diaminopimelic acid to the nucleotide precursor UDP-N-acetylmuramoyl-L-alanyl-D-glutamate (UMAG) in the biosynthesis of bacterial cell-wall peptidoglycan. The chain is UDP-N-acetylmuramoyl-L-alanyl-D-glutamate--2,6-diaminopimelate ligase from Blochmanniella floridana.